The following is a 337-amino-acid chain: Mitochondrial glutathione transporter SLC25A40 (337 aa).

Solcar repeat units follow at residues 14–132 (VTPL…LSAF), 140–224 (NETR…LKRW), and 234–328 (PTFM…GKSF). 6 helical membrane-spanning segments follow: residues 20-40 (MIASCTGAVLTSLMVTPLDVV), 104-124 (LWSGLPPTLVMAIPATVIYFT), 146-166 (IVAGVVARFGAVTVISPLELI), 200-221 (WAPTILRDVPFSAMYWYNYENL), 240-260 (FTSGALSGSFAAVATLPFDVV), and 299-319 (GLFTGLIPRLVKIVPACAIMI).

The protein belongs to the mitochondrial carrier (TC 2.A.29) family.

The protein resides in the mitochondrion inner membrane. The catalysed reaction is glutathione(in) = glutathione(out). Functionally, probable mitochondrial transporter required for glutathione import into mitochondria. Glutathione, which plays key roles in oxidative metabolism, is produced exclusively in the cytosol and is imported in many organelles. Mitochondrial glutathione is required for the activity and stability of proteins containing iron-sulfur clusters, as well as erythropoiesis. The protein is Mitochondrial glutathione transporter SLC25A40 of Mus musculus (Mouse).